Reading from the N-terminus, the 218-residue chain is Large ribosomal subunit protein uL3 (218 aa).

Belongs to the universal ribosomal protein uL3 family. In terms of assembly, part of the 50S ribosomal subunit. Forms a cluster with proteins L14 and L19.

Its function is as follows. One of the primary rRNA binding proteins, it binds directly near the 3'-end of the 23S rRNA, where it nucleates assembly of the 50S subunit. The sequence is that of Large ribosomal subunit protein uL3 from Corynebacterium jeikeium (strain K411).